Consider the following 115-residue polypeptide: UPF0597 protein NTHI1023 (115 aa).

The protein belongs to the UPF0597 family.

The polypeptide is UPF0597 protein NTHI1023 (Haemophilus influenzae (strain 86-028NP)).